Reading from the N-terminus, the 388-residue chain is Pre-mRNA-splicing factor cwf2 (388 aa).

The tract at residues 43–63 (VKRKKQPARKQIETRPEYEME) is disordered. A C3H1-type zinc finger spans residues 111–138 (NPGSFFCLYFARGMCSEGSKCEYLHRLP). The region spanning 174–248 (YTLYVGGITP…ECLNVRWATT (75 aa)) is the RRM domain. The interval 331 to 352 (PNKSQSEEGSNDDHKSVTTTES) is disordered.

This sequence belongs to the RRM CWC2 family. As to quaternary structure, belongs to the 40S cdc5-associated complex (or cwf complex), a spliceosome sub-complex reminiscent of a late-stage spliceosome composed of the U2, U5 and U6 snRNAs and at least brr2, cdc5, cwf2/prp3, cwf3/syf1, cwf4/syf3, cwf5/ecm2, spp42/cwf6, cwf7/spf27, cwf8, cwf9, cwf10, cwf11, cwf12, prp45/cwf13, cwf14, cwf15, cwf16, cwf17, cwf18, cwf19, cwf20, cwf21, cwf22, cwf23, cwf24, cwf25, cwf26, cyp7/cwf27, cwf28, cwf29/ist3, lea1, msl1, prp5/cwf1, prp10, prp12/sap130, prp17, prp22, sap61, sap62, sap114, sap145, slu7, smb1, smd1, smd3, smf1, smg1 and syf2.

It localises to the nucleus. In terms of biological role, involved in the first step of pre-mRNA splicing. Required for cell growth and cell cycle control. Plays a role in the levels of the U1, U4, U5 and U6 snRNAs and the maintenance of the U4/U6 snRNA complex. May provide the link between the 'nineteen complex' NTC spliceosome protein complex and the spliceosome through the U6 snRNA. Associates predominantly with U6 snRNAs in assembled active spliceosomes. Binds directly to the internal stem-loop (ISL) domain of the U6 snRNA and to the pre-mRNA intron near the 5' splice site during the activation and catalytic phases of the spliceosome cycle. Involved in pre-mRNA splicing. In Schizosaccharomyces pombe (strain 972 / ATCC 24843) (Fission yeast), this protein is Pre-mRNA-splicing factor cwf2 (cwf2).